The chain runs to 119 residues: uncharacterized protein (119 aa).

The next 2 membrane-spanning stretches (helical) occupy residues 52 to 72 and 88 to 108; these read IVLFVLGFLLLIPWIINVINI and VLFSLSIAIIVIFVIFFIFLI.

The protein localises to the membrane. This is an uncharacterized protein from Dictyostelium discoideum (Social amoeba).